We begin with the raw amino-acid sequence, 322 residues long: Lymphokine-activated killer T-cell-originated protein kinase (322 aa).

At Met-1 the chain carries N-acetylmethionine. Thr-9 and Thr-24 each carry phosphothreonine. Ser-32 carries the phosphoserine modification. A Protein kinase domain is found at 32–322 (SPFMQKLGFG…HIVEALETDV (291 aa)). 38–46 (LGFGTGVNV) is an ATP binding site. Ser-59 is subject to Phosphoserine. Residue Lys-64 participates in ATP binding. Catalysis depends on Asp-167, which acts as the Proton acceptor. Lys-169 participates in a covalent cross-link: Glycyl lysine isopeptide (Lys-Gly) (interchain with G-Cter in SUMO2). The segment at 320–322 (TDV) is PDZ-interaction.

It belongs to the protein kinase superfamily. STE Ser/Thr protein kinase family. MAP kinase kinase subfamily. In terms of assembly, interacts with DLG1 and TP53. In terms of processing, phosphorylated; in a cell-cycle dependent manner at mitosis. Expressed in the testis and placenta. In the testis, restrictedly expressed in outer cell layer of seminiferous tubules.

The enzyme catalyses L-seryl-[protein] + ATP = O-phospho-L-seryl-[protein] + ADP + H(+). It catalyses the reaction L-threonyl-[protein] + ATP = O-phospho-L-threonyl-[protein] + ADP + H(+). The catalysed reaction is L-tyrosyl-[protein] + ATP = O-phospho-L-tyrosyl-[protein] + ADP + H(+). Activated by phosphorylation. Functionally, phosphorylates MAP kinase p38. Seems to be active only in mitosis. May also play a role in the activation of lymphoid cells. When phosphorylated, forms a complex with TP53, leading to TP53 destabilization and attenuation of G2/M checkpoint during doxorubicin-induced DNA damage. This is Lymphokine-activated killer T-cell-originated protein kinase (PBK) from Homo sapiens (Human).